Consider the following 219-residue polypeptide: U-scoloptoxin(11)-Sm7a (219 aa).

A signal peptide spans 1-15 (MYLFLMINYFVLANS).

This sequence belongs to the scoloptoxin-11 family. Post-translationally, contains 8 disulfide bonds. Expressed by the venom gland.

The protein resides in the secreted. This is U-scoloptoxin(11)-Sm7a from Scolopendra morsitans (Tanzanian blue ringleg centipede).